The sequence spans 212 residues: Protein-L-isoaspartate O-methyltransferase (212 aa).

The active site involves serine 61.

This sequence belongs to the methyltransferase superfamily. L-isoaspartyl/D-aspartyl protein methyltransferase family.

The protein localises to the cytoplasm. It catalyses the reaction [protein]-L-isoaspartate + S-adenosyl-L-methionine = [protein]-L-isoaspartate alpha-methyl ester + S-adenosyl-L-homocysteine. Catalyzes the methyl esterification of L-isoaspartyl residues in peptides and proteins that result from spontaneous decomposition of normal L-aspartyl and L-asparaginyl residues. It plays a role in the repair and/or degradation of damaged proteins. The sequence is that of Protein-L-isoaspartate O-methyltransferase from Pseudoalteromonas atlantica (strain T6c / ATCC BAA-1087).